We begin with the raw amino-acid sequence, 246 residues long: Exosome complex component Rrp41 (246 aa).

Belongs to the RNase PH family. Rrp41 subfamily. In terms of assembly, component of the archaeal exosome complex. Forms a hexameric ring-like arrangement composed of 3 Rrp41-Rrp42 heterodimers. The hexameric ring associates with a trimer of Rrp4 and/or Csl4 subunits.

The protein resides in the cytoplasm. In terms of biological role, catalytic component of the exosome, which is a complex involved in RNA degradation. Has 3'-&gt;5' exoribonuclease activity. Can also synthesize heteromeric RNA-tails. This is Exosome complex component Rrp41 from Pyrobaculum arsenaticum (strain DSM 13514 / JCM 11321 / PZ6).